Here is a 46-residue protein sequence, read N- to C-terminus: Protein PsbN (46 aa).

The helical transmembrane segment at 10–30 (IAITILIVLLGLTAFGVYTAF) threads the bilayer.

This sequence belongs to the PsbN family.

Its subcellular location is the cellular thylakoid membrane. Functionally, may play a role in photosystem I and II biogenesis. This chain is Protein PsbN, found in Prochlorococcus marinus (strain SARG / CCMP1375 / SS120).